The following is an 815-amino-acid chain: Protein pygopus (815 aa).

Disordered regions lie at residues 1-107 (MTHN…QVSA) and 147-711 (GMGG…GPMG). The Nuclear localization signal signature appears at 39 to 45 (PKKRRKT). The span at 46 to 73 (SSAANSAAAVAAAAAAAAAANSMQQQQA) shows a compositional bias: low complexity. Over residues 74 to 86 (PPTPQDLLPPPPM) the composition is skewed to pro residues. The span at 188–199 (RGMSPMHPHQMG) shows a compositional bias: low complexity. Composition is skewed to gly residues over residues 230–248 (PMGG…GMGG) and 257–269 (GMGG…GGPN). Positions 307–316 (LGPPSGPGPG) are enriched in pro residues. 4 stretches are compositionally biased toward low complexity: residues 323–341 (GPQQ…NGQM), 407–424 (SNNN…NQNP), 444–478 (PSVS…VPTS), and 495–545 (GPSP…HQQH). The segment covering 569-580 (PQQPSHLGPPHP) has biased composition (pro residues). A compositionally biased stretch (gly residues) spans 602 to 621 (GGPGMHGGPAGMPPHMGGGP). Residues 622–636 (NPHMMGGPHGNAGPH) show a composition bias toward low complexity. A compositionally biased stretch (gly residues) spans 640–656 (GHMGGVPGPGPGPGGMN). Basic residues predominate over residues 663–675 (MSPHHGHPHHHHN). Residues 678–711 (GGPGPNMFGGGGGGPMGPGGPMGNMGPMGGGPMG) are compositionally biased toward gly residues. A PHD-type zinc finger spans residues 747 to 805 (IYPCGMCHKEVNDNDEAVFCESGCNFFFHRTCVGLTEAAFQMLNKEVFAEWCCDKCVSS).

Binds to BCL9 via the PHD-type zinc finger motif, and thereby becomes part of the nuclear ARM/PAN complex. As to expression, ubiquitous throughout embryogenesis and larval development.

The protein localises to the nucleus. Functionally, involved in signal transduction through the Wnt pathway. This is Protein pygopus (pygo) from Drosophila melanogaster (Fruit fly).